We begin with the raw amino-acid sequence, 264 residues long: Iodotyrosine deiodinase (264 aa).

Residues 75 to 79 and 103 to 104 contribute to the FMN site; these read RRTVR and SG. 3-iodo-L-tyrosine is bound by residues Ala-105, Glu-132, Tyr-136, and Lys-157. FMN is bound by residues 212-214 and Arg-254; that span reads TST.

This sequence belongs to the nitroreductase family. Requires FMN as cofactor.

The catalysed reaction is 2 iodide + L-tyrosine + 2 NADP(+) = 3,5-diiodo-L-tyrosine + 2 NADPH + H(+). It catalyses the reaction iodide + L-tyrosine + NADP(+) = 3-iodo-L-tyrosine + NADPH. It carries out the reaction 3-iodo-L-tyrosine + iodide + NADP(+) = 3,5-diiodo-L-tyrosine + NADPH + H(+). The enzyme catalyses L-tyrosine + chloride + NADP(+) = 3-chloro-L-tyrosine + NADPH. The catalysed reaction is bromide + L-tyrosine + NADP(+) = 3-bromo-L-tyrosine + NADPH. Catalyzes the dehalogenation of halotyrosines such as 3,5-diiodo-L-tyrosine. Likely to also catalyze the dehalogenation of other halotyrosines such as 3-bromo-L-tyrosine, 3-chloro-L-tyrosine and 3-iodo-L-tyrosine. This Nematostella vectensis (Starlet sea anemone) protein is Iodotyrosine deiodinase.